We begin with the raw amino-acid sequence, 331 residues long: Biotin synthase (331 aa).

Positions 51–278 (QTIQLSTLMS…KSYVRLSAGR (228 aa)) constitute a Radical SAM core domain. Residues Cys66, Cys70, and Cys73 each contribute to the [4Fe-4S] cluster site. [2Fe-2S] cluster contacts are provided by Cys110, Cys141, Cys201, and Arg273.

Belongs to the radical SAM superfamily. Biotin synthase family. In terms of assembly, homodimer. Requires [4Fe-4S] cluster as cofactor. The cofactor is [2Fe-2S] cluster.

The catalysed reaction is (4R,5S)-dethiobiotin + (sulfur carrier)-SH + 2 reduced [2Fe-2S]-[ferredoxin] + 2 S-adenosyl-L-methionine = (sulfur carrier)-H + biotin + 2 5'-deoxyadenosine + 2 L-methionine + 2 oxidized [2Fe-2S]-[ferredoxin]. It functions in the pathway cofactor biosynthesis; biotin biosynthesis; biotin from 7,8-diaminononanoate: step 2/2. Functionally, catalyzes the conversion of dethiobiotin (DTB) to biotin by the insertion of a sulfur atom into dethiobiotin via a radical-based mechanism. In Histophilus somni (strain 129Pt) (Haemophilus somnus), this protein is Biotin synthase.